The primary structure comprises 47 residues: Turripeptide Ici9.1 (47 aa).

3 disulfide bridges follow: C1–C31, C5–C24, and C13–C45. The region spanning 1–47 (CLSVCSMEYWPVCGSDGKTYPNECHLTSEACMSNTDITVAHVGKCDQ) is the Kazal-like domain.

Belongs to the conopeptide P-like superfamily. Expressed by the venom duct.

The protein resides in the secreted. Its function is as follows. Acts as a neurotoxin by inhibiting an ion channel. May also act as a serine protease inhibitor, since it possess the kazal serine protease inhibitor signature. This chain is Turripeptide Ici9.1, found in Iotyrris cingulifera (Sea snail).